Here is a 185-residue protein sequence, read N- to C-terminus: Elongation factor P (185 aa).

This sequence belongs to the elongation factor P family.

The protein localises to the cytoplasm. It participates in protein biosynthesis; polypeptide chain elongation. Its function is as follows. Involved in peptide bond synthesis. Stimulates efficient translation and peptide-bond synthesis on native or reconstituted 70S ribosomes in vitro. Probably functions indirectly by altering the affinity of the ribosome for aminoacyl-tRNA, thus increasing their reactivity as acceptors for peptidyl transferase. This is Elongation factor P from Streptococcus pyogenes serotype M49 (strain NZ131).